The sequence spans 395 residues: GA-binding protein subunit beta-1 (395 aa).

The residue at position 2 (Ser2) is an N-acetylserine. 2 ANK repeats span residues 5 to 34 (DLGK…PFTT) and 37 to 66 (LGTS…SRDA). At Lys69 the chain carries N6-acetyllysine. ANK repeat units lie at residues 70 to 99 (VDRT…DVNA), 103 to 132 (LKMT…DVHT), and 136 to 166 (FCKT…QINT). The transcription activation and HCFC1 interaction stretch occupies residues 258-327 (DGAIQQVVSS…ETVISEEPPA (70 aa)). Lys352 and Lys381 each carry N6-acetyllysine.

As to quaternary structure, heterotetramer of two alpha and two beta subunits. Interacts with HCFC1, causing repression of transcriptional activity. Acetylated by EP300/p300. Deacetylated by SIRT7, promoting heterotetramerization and activity.

It localises to the nucleus. In terms of biological role, transcription factor capable of interacting with purine rich repeats (GA repeats). Acts as a master regulator of nuclear-encoded mitochondrial genes. Functionally, (Microbial infection) Necessary for the expression of the Adenovirus E4 gene. This is GA-binding protein subunit beta-1 (GABPB1) from Homo sapiens (Human).